The primary structure comprises 434 residues: Nicotinate phosphoribosyltransferase (434 aa).

At histidine 242 the chain carries Phosphohistidine; by autocatalysis.

The protein belongs to the NAPRTase family. Post-translationally, transiently phosphorylated on a His residue during the reaction cycle. Phosphorylation strongly increases the affinity for substrates and increases the rate of nicotinate D-ribonucleotide production. Dephosphorylation regenerates the low-affinity form of the enzyme, leading to product release.

The enzyme catalyses nicotinate + 5-phospho-alpha-D-ribose 1-diphosphate + ATP + H2O = nicotinate beta-D-ribonucleotide + ADP + phosphate + diphosphate. Its pathway is cofactor biosynthesis; NAD(+) biosynthesis; nicotinate D-ribonucleotide from nicotinate: step 1/1. In terms of biological role, catalyzes the synthesis of beta-nicotinate D-ribonucleotide from nicotinate and 5-phospho-D-ribose 1-phosphate at the expense of ATP. This is Nicotinate phosphoribosyltransferase from Bartonella quintana (strain Toulouse) (Rochalimaea quintana).